We begin with the raw amino-acid sequence, 144 residues long: MNFKYIVAVSFLIASAYARSVQNDEQSLSQRDVLEEESLREIRGIGGKILSGLKTALKGAAKELASTYLHRKRTAEEHEVMKRLEAVMRDLDSLDYPEEASERETRGFNQDEIANLFTKKEKRILGPVLGLVGSALGGLIKKIG.

The N-terminal stretch at 1–18 (MNFKYIVAVSFLIASAYA) is a signal peptide. 2 propeptides span residues 19-43 (RSVQ…REIR) and 73-122 (RTAE…KKEK). An Isoleucine amide modification is found at Ile-143.

This sequence belongs to the bombinin family. As to expression, expressed by the skin glands.

The protein resides in the secreted. Maximin-3 shows antibacterial activity against both Gram-positive and Gram-negative bacteria. It also shows antimicrobial activity against the fungus C.albicans, but not against A.flavus nor P.uticale. It has little hemolytic activity. It possess a significant cytotoxicity against tumor cell lines. It possess a significant anti-HIV activity. It shows high spermicidal activity. Its function is as follows. Maximin-H11 shows antimicrobial activity against bacteria and against the fungus C.albicans. Shows strong hemolytic activity. This is Maximins 3/H11 type 1 from Bombina maxima (Giant fire-bellied toad).